The chain runs to 525 residues: Lysine--tRNA ligase (525 aa).

The 'HIGH' region motif lies at Pro44–Thr52. A 'KMSKS' region motif is present at residues Lys290–Ser294. Residue Lys293 participates in ATP binding.

The protein belongs to the class-I aminoacyl-tRNA synthetase family.

It localises to the cytoplasm. The enzyme catalyses tRNA(Lys) + L-lysine + ATP = L-lysyl-tRNA(Lys) + AMP + diphosphate. This is Lysine--tRNA ligase from Rickettsia felis (strain ATCC VR-1525 / URRWXCal2) (Rickettsia azadi).